A 356-amino-acid polypeptide reads, in one-letter code: Protein-glutamate methylesterase/protein-glutamine glutaminase 2 (356 aa).

The 118-residue stretch at 6-123 folds into the Response regulatory domain; the sequence is KVLIVDDSAL…KQFLEESSIR (118 aa). The residue at position 57 (aspartate 57) is a 4-aspartylphosphate. The CheB-type methylesterase domain maps to 165 to 356; it reads VQRTEKVVVV…AAAIVKACNS (192 aa). Catalysis depends on residues serine 177, histidine 203, and aspartate 299.

Belongs to the CheB family. In terms of processing, phosphorylated by CheA. Phosphorylation of the N-terminal regulatory domain activates the methylesterase activity.

Its subcellular location is the cytoplasm. The catalysed reaction is [protein]-L-glutamate 5-O-methyl ester + H2O = L-glutamyl-[protein] + methanol + H(+). It catalyses the reaction L-glutaminyl-[protein] + H2O = L-glutamyl-[protein] + NH4(+). In terms of biological role, involved in chemotaxis. Part of a chemotaxis signal transduction system that modulates chemotaxis in response to various stimuli. Catalyzes the demethylation of specific methylglutamate residues introduced into the chemoreceptors (methyl-accepting chemotaxis proteins or MCP) by CheR. Also mediates the irreversible deamidation of specific glutamine residues to glutamic acid. The polypeptide is Protein-glutamate methylesterase/protein-glutamine glutaminase 2 (Oleidesulfovibrio alaskensis (strain ATCC BAA-1058 / DSM 17464 / G20) (Desulfovibrio alaskensis)).